An 84-amino-acid chain; its full sequence is Small ribosomal subunit protein bS18 (84 aa).

The protein belongs to the bacterial ribosomal protein bS18 family. Part of the 30S ribosomal subunit. Forms a tight heterodimer with protein bS6.

Its function is as follows. Binds as a heterodimer with protein bS6 to the central domain of the 16S rRNA, where it helps stabilize the platform of the 30S subunit. The protein is Small ribosomal subunit protein bS18 of Vesicomyosocius okutanii subsp. Calyptogena okutanii (strain HA).